The following is a 371-amino-acid chain: Putative agmatine deiminase (371 aa).

The Amidino-cysteine intermediate role is filled by Cys-361.

It belongs to the agmatine deiminase family.

The catalysed reaction is agmatine + H2O = N-carbamoylputrescine + NH4(+). The sequence is that of Putative agmatine deiminase from Selenomonas ruminantium.